The following is a 595-amino-acid chain: uncharacterized protein (595 aa).

The segment at Met1–Cys21 is disordered. WD repeat units lie at residues Glu56–Lys95, Ala100–Phe143, Gly144–Ser184, Val187–Glu226, Ala229–Glu268, Gly313–Leu352, Ser356–Asp393, Lys433–Val472, Asp477–Ser516, Phe520–Ala559, and His564–Thr594.

Belongs to the WD repeat AIP1 family.

This is an uncharacterized protein from Schizosaccharomyces pombe (strain 972 / ATCC 24843) (Fission yeast).